The chain runs to 204 residues: Ribonuclease HII (204 aa).

Positions 14–204 (QYICGVDEVG…SFKLSCLGEK (191 aa)) constitute an RNase H type-2 domain. A divalent metal cation is bound by residues Asp-20, Glu-21, and Asp-116.

The protein belongs to the RNase HII family. It depends on Mn(2+) as a cofactor. Mg(2+) is required as a cofactor.

Its subcellular location is the cytoplasm. The enzyme catalyses Endonucleolytic cleavage to 5'-phosphomonoester.. In terms of biological role, endonuclease that specifically degrades the RNA of RNA-DNA hybrids. This is Ribonuclease HII from Chloroherpeton thalassium (strain ATCC 35110 / GB-78).